Consider the following 209-residue polypeptide: Dual specificity protein phosphatase 22 (209 aa).

The Tyrosine-protein phosphatase domain occupies 4–144; sequence GMNKILTGLF…LEDFGKCEVH (141 aa). Cys88 acts as the Phosphocysteine intermediate in catalysis. Residues 169–192 are disordered; sequence LDKHKQQEAAESQNATSSGRQWNS. The segment covering 177–190 has biased composition (polar residues); that stretch reads AAESQNATSSGRQW.

The protein belongs to the protein-tyrosine phosphatase family. Non-receptor class dual specificity subfamily.

It localises to the cytoplasm. It is found in the nucleus. It carries out the reaction O-phospho-L-tyrosyl-[protein] + H2O = L-tyrosyl-[protein] + phosphate. It catalyses the reaction O-phospho-L-seryl-[protein] + H2O = L-seryl-[protein] + phosphate. The catalysed reaction is O-phospho-L-threonyl-[protein] + H2O = L-threonyl-[protein] + phosphate. Its function is as follows. Activates the Jnk signaling pathway. Dephosphorylates and deactivates p38 and stress-activated protein kinase/c-Jun N-terminal kinase (SAPK/JNK). The polypeptide is Dual specificity protein phosphatase 22 (dusp22) (Xenopus laevis (African clawed frog)).